We begin with the raw amino-acid sequence, 112 residues long: Frizzy aggregation protein FrzB (112 aa).

Functionally, necessary for proper aggregation of cells to form fruiting bodies. FRZ genes define a system of signal transduction analogous to the enterobacterial chemotaxis systems. This Myxococcus xanthus protein is Frizzy aggregation protein FrzB (frzB).